A 313-amino-acid chain; its full sequence is Serine/threonine-protein phosphatase CPPED1 (313 aa).

Ser-2 is subject to Phosphoserine. A catalytic region spans residues 47–250 (KAWATGDCDN…AVFSGHYHRN (204 aa)). The a divalent metal cation site is built by Asp-53, Asp-90, Asn-127, and His-246. At Ser-293 the chain carries Phosphoserine.

Belongs to the metallophosphoesterase superfamily. CPPED1 family. A divalent metal cation serves as cofactor.

The protein resides in the cytoplasm. The enzyme catalyses O-phospho-L-seryl-[protein] + H2O = L-seryl-[protein] + phosphate. It carries out the reaction O-phospho-L-threonyl-[protein] + H2O = L-threonyl-[protein] + phosphate. Its function is as follows. Protein phosphatase that dephosphorylates AKT family kinase specifically at 'Ser-473', blocking cell cycle progression and promoting cell apoptosis. May play an inhibitory role in glucose uptake by adipocytes. The chain is Serine/threonine-protein phosphatase CPPED1 (CPPED1) from Bos taurus (Bovine).